The chain runs to 449 residues: Glycine receptor subunit alpha-2 (449 aa).

The N-terminal stretch at 1–27 (MTRPSVKLLTTLLACLMEMLNFRVSSG) is a signal peptide. The Extracellular segment spans residues 28–255 (KDPDLLSSSS…FHLERQMGYY (228 aa)). Residue N70 is glycosylated (N-linked (GlcNAc...) asparagine). Glycine is bound by residues R97 and S161. R97 is a strychnine binding site. The cysteines at positions 170 and 184 are disulfide-linked. Residues E224 and D226 each coordinate Zn(2+). C230 and C241 are oxidised to a cystine. T236 contacts glycine. H247 lines the Zn(2+) pocket. A helical membrane pass occupies residues 256-276 (LIQMYIPSLLIVILSWVSFWI). Over 277–282 (NMDAAP) the chain is Cytoplasmic. A helical transmembrane segment spans residues 283 to 302 (ARVALGITTVLTMTTQSSGS). Over 303 to 313 (RASLPKVSYVK) the chain is Extracellular. A helical transmembrane segment spans residues 314–334 (AIDIWMAVCLLFVFAALLEYA). Over 335 to 420 (GVNFVSRQQK…RAKRIDTISR (86 aa)) the chain is Cytoplasmic. Residues 421–441 (AAFPLAFLIFNVFYWITYKII) form a helical membrane-spanning segment. Residues 442–449 (RHESARKD) are Extracellular-facing.

This sequence belongs to the ligand-gated ion channel (TC 1.A.9) family.

The protein localises to the postsynaptic cell membrane. The protein resides in the synapse. It is found in the cell membrane. It localises to the cell projection. The catalysed reaction is chloride(in) = chloride(out). Its activity is regulated as follows. Channel opening is triggered by extracellular glycine. Channel opening is also triggered by taurine and beta-alanine. Inhibited by strychnine. In terms of biological role, subunit of heteromeric glycine-gated chloride channels. Plays a role in synaptic plasticity. Contributes to the generation of inhibitory postsynaptic currents, and is involved in the down-regulation of neuronal excitability. The chain is Glycine receptor subunit alpha-2 (glra2) from Danio rerio (Zebrafish).